The primary structure comprises 208 residues: Small ribosomal subunit protein uS3 (208 aa).

Positions 16–85 (VDEYLKNKLP…KPQIEVKQIE (70 aa)) constitute a KH type-2 domain.

Belongs to the universal ribosomal protein uS3 family. Part of the 30S ribosomal subunit.

In terms of biological role, binds the lower part of the 30S subunit head. The protein is Small ribosomal subunit protein uS3 of Methanococcus aeolicus (strain ATCC BAA-1280 / DSM 17508 / OCM 812 / Nankai-3).